An 81-amino-acid chain; its full sequence is Large ribosomal subunit protein uL29c (81 aa).

It belongs to the universal ribosomal protein uL29 family.

The protein localises to the plastid. It is found in the chloroplast. The chain is Large ribosomal subunit protein uL29c from Phaeodactylum tricornutum (strain CCAP 1055/1).